Reading from the N-terminus, the 2300-residue chain is Adenylate cyclase (2300 aa).

Polar residues-rich tracts occupy residues Met-1–Thr-21 and Thr-28–Leu-41. Disordered regions lie at residues Met-1 to Leu-256, Gly-272 to Arg-593, and Thr-631 to Asp-652. Low complexity-rich tracts occupy residues Ser-42–Ser-61 and Ser-92–Pro-152. A compositionally biased stretch (polar residues) spans Thr-153–Ser-169. Residues Ile-170–Met-185 show a composition bias toward basic and acidic residues. Residues Gln-204 to Gln-221 show a composition bias toward low complexity. Over residues Val-228–Gln-237 the composition is skewed to polar residues. Residues Ser-303–Ser-313 show a composition bias toward low complexity. The segment covering Gly-333 to Ser-344 has biased composition (basic and acidic residues). A compositionally biased stretch (polar residues) spans Glu-345 to Met-357. Positions Pro-410–Glu-421 are enriched in pro residues. Polar residues predominate over residues Asp-455–Ser-469. The segment covering Lys-484–Ser-501 has biased composition (basic and acidic residues). The segment covering Asn-511–Ala-550 has biased composition (polar residues). The span at Ser-552–Asn-565 shows a compositional bias: basic residues. Low complexity predominate over residues Thr-631–Lys-643. Residues Ser-749 to Ser-841 enclose the Ras-associating domain. LRR repeat units follow at residues Asn-867–Lys-890, Ala-892–Ala-914, Cys-915–Ala-938, Ser-939–Lys-961, Leu-962–Lys-986, Leu-988–Leu-1008, Glu-1009–Leu-1031, Asn-1033–Leu-1055, Val-1056–Arg-1079, Glu-1081–Phe-1097, Glu-1098–Val-1119, Pro-1120–Leu-1142, Met-1143–Leu-1165, Lys-1166–Leu-1188, Thr-1189–Ala-1211, and Lys-1213–Ala-1234. The tract at residues Pro-1228–Lys-1336 is disordered. Positions Ala-1253–Pro-1263 are enriched in polar residues. Residues Thr-1313 to Val-1327 show a composition bias toward low complexity. LRR repeat units lie at residues Ser-1349 to Glu-1369, Leu-1373 to Ser-1396, Pro-1398 to Glu-1420, His-1422 to Ala-1445, Lys-1447 to Trp-1469, and Asn-1474 to Pro-1497. The region spanning Pro-1552–Val-1828 is the PPM-type phosphatase domain. Residues Phe-1847–Val-1867 are disordered. One can recognise a Guanylate cyclase domain in the interval Ser-1892–Ser-2029. Asp-1897 and Asp-1940 together coordinate Mg(2+). The interval Leu-2272–Glu-2300 is disordered. Acidic residues predominate over residues Asp-2290–Glu-2300.

It belongs to the adenylyl cyclase class-4/guanylyl cyclase family. Mg(2+) serves as cofactor.

It catalyses the reaction ATP = 3',5'-cyclic AMP + diphosphate. Plays essential roles in regulation of cellular metabolism by catalyzing the synthesis of a second messenger, cAMP. This chain is Adenylate cyclase (cr-1), found in Neurospora crassa (strain ATCC 24698 / 74-OR23-1A / CBS 708.71 / DSM 1257 / FGSC 987).